The chain runs to 526 residues: tRNA-2-methylthio-N(6)-dimethylallyladenosine synthase (526 aa).

Positions R14–H130 constitute an MTTase N-terminal domain. The [4Fe-4S] cluster site is built by C23, C59, C93, C167, C171, and C174. The Radical SAM core domain occupies R153–E401. One can recognise a TRAM domain in the interval Q404 to L483.

The protein belongs to the methylthiotransferase family. MiaB subfamily. In terms of assembly, monomer. The cofactor is [4Fe-4S] cluster.

Its subcellular location is the cytoplasm. The enzyme catalyses N(6)-dimethylallyladenosine(37) in tRNA + (sulfur carrier)-SH + AH2 + 2 S-adenosyl-L-methionine = 2-methylsulfanyl-N(6)-dimethylallyladenosine(37) in tRNA + (sulfur carrier)-H + 5'-deoxyadenosine + L-methionine + A + S-adenosyl-L-homocysteine + 2 H(+). Catalyzes the methylthiolation of N6-(dimethylallyl)adenosine (i(6)A), leading to the formation of 2-methylthio-N6-(dimethylallyl)adenosine (ms(2)i(6)A) at position 37 in tRNAs that read codons beginning with uridine. The chain is tRNA-2-methylthio-N(6)-dimethylallyladenosine synthase from Mycobacterium sp. (strain JLS).